A 308-amino-acid polypeptide reads, in one-letter code: Elongation factor Ts (308 aa).

Residues threonine 80–valine 83 are involved in Mg(2+) ion dislocation from EF-Tu.

This sequence belongs to the EF-Ts family.

It localises to the cytoplasm. Associates with the EF-Tu.GDP complex and induces the exchange of GDP to GTP. It remains bound to the aminoacyl-tRNA.EF-Tu.GTP complex up to the GTP hydrolysis stage on the ribosome. This Rhizobium leguminosarum bv. trifolii (strain WSM2304) protein is Elongation factor Ts.